Reading from the N-terminus, the 442-residue chain is tRNA(Ile)-lysidine synthase (442 aa).

An ATP-binding site is contributed by S28–S33.

Belongs to the tRNA(Ile)-lysidine synthase family.

The protein resides in the cytoplasm. The enzyme catalyses cytidine(34) in tRNA(Ile2) + L-lysine + ATP = lysidine(34) in tRNA(Ile2) + AMP + diphosphate + H(+). In terms of biological role, ligates lysine onto the cytidine present at position 34 of the AUA codon-specific tRNA(Ile) that contains the anticodon CAU, in an ATP-dependent manner. Cytidine is converted to lysidine, thus changing the amino acid specificity of the tRNA from methionine to isoleucine. The chain is tRNA(Ile)-lysidine synthase from Pseudomonas aeruginosa (strain ATCC 15692 / DSM 22644 / CIP 104116 / JCM 14847 / LMG 12228 / 1C / PRS 101 / PAO1).